A 137-amino-acid polypeptide reads, in one-letter code: MSYVNRHLIHQINQSARLIAKKANEQLEPFGLYSSQWSVLYCLRTIGPMTQKEIWSYLNVEAPTVTRTIKRLEENGWVQRRQGEDKREKLVVLTKEAEKKYEEINVKMLKFEEELLADFRDEDKEAFSHLFRMFLQQ.

Residues 5-136 form the HTH marR-type domain; sequence NRHLIHQINQ…FSHLFRMFLQ (132 aa). The H-T-H motif DNA-binding region spans 51 to 74; that stretch reads QKEIWSYLNVEAPTVTRTIKRLEE.

This is an uncharacterized protein from Bacillus subtilis (strain 168).